The following is a 380-amino-acid chain: Lipid-A-disaccharide synthase (380 aa).

It belongs to the LpxB family.

The catalysed reaction is a lipid X + a UDP-2-N,3-O-bis[(3R)-3-hydroxyacyl]-alpha-D-glucosamine = a lipid A disaccharide + UDP + H(+). Its pathway is bacterial outer membrane biogenesis; LPS lipid A biosynthesis. Functionally, condensation of UDP-2,3-diacylglucosamine and 2,3-diacylglucosamine-1-phosphate to form lipid A disaccharide, a precursor of lipid A, a phosphorylated glycolipid that anchors the lipopolysaccharide to the outer membrane of the cell. The polypeptide is Lipid-A-disaccharide synthase (Francisella tularensis subsp. tularensis (strain FSC 198)).